The chain runs to 270 residues: Abhydrolase domain-containing protein C22H12.03 (270 aa).

Residues Pro21 to Pro257 form the AB hydrolase-1 domain. Active-site charge relay system residues include Ser95, Glu190, and His250.

This sequence belongs to the AB hydrolase superfamily.

Its subcellular location is the mitochondrion. This Schizosaccharomyces pombe (strain 972 / ATCC 24843) (Fission yeast) protein is Abhydrolase domain-containing protein C22H12.03.